The primary structure comprises 154 residues: MNIFEGNLVSEGLKFGIVVGRFNEFIGGKLLEGAIDGLKRHGVKEEDIDIAWVPGAFEIPLIAKKMAKSPKYDGVICLGAVIKGSTSHYDYVCSEVSKGIASVSLESGKPVIFGVLTTNTIEQAIERAGTKAGNKGYESAVSAIEMANLLNTIG.

Residues Phe-22, 56–58, and 80–82 contribute to the 5-amino-6-(D-ribitylamino)uracil site; these read AFE and AVI. (2S)-2-hydroxy-3-oxobutyl phosphate is bound at residue 85–86; the sequence is ST. His-88 functions as the Proton donor in the catalytic mechanism. Phe-113 is a binding site for 5-amino-6-(D-ribitylamino)uracil. Residue Arg-127 coordinates (2S)-2-hydroxy-3-oxobutyl phosphate.

Belongs to the DMRL synthase family.

It carries out the reaction (2S)-2-hydroxy-3-oxobutyl phosphate + 5-amino-6-(D-ribitylamino)uracil = 6,7-dimethyl-8-(1-D-ribityl)lumazine + phosphate + 2 H2O + H(+). It functions in the pathway cofactor biosynthesis; riboflavin biosynthesis; riboflavin from 2-hydroxy-3-oxobutyl phosphate and 5-amino-6-(D-ribitylamino)uracil: step 1/2. Catalyzes the formation of 6,7-dimethyl-8-ribityllumazine by condensation of 5-amino-6-(D-ribitylamino)uracil with 3,4-dihydroxy-2-butanone 4-phosphate. This is the penultimate step in the biosynthesis of riboflavin. The sequence is that of 6,7-dimethyl-8-ribityllumazine synthase from Clostridium beijerinckii (strain ATCC 51743 / NCIMB 8052) (Clostridium acetobutylicum).